Here is a 335-residue protein sequence, read N- to C-terminus: Ferrochelatase (335 aa).

Histidine 211 and glutamate 290 together coordinate Fe cation.

This sequence belongs to the ferrochelatase family.

The protein localises to the cytoplasm. The enzyme catalyses heme b + 2 H(+) = protoporphyrin IX + Fe(2+). Its pathway is porphyrin-containing compound metabolism; protoheme biosynthesis; protoheme from protoporphyrin-IX: step 1/1. In terms of biological role, catalyzes the ferrous insertion into protoporphyrin IX. The chain is Ferrochelatase from Sulfurihydrogenibium sp. (strain YO3AOP1).